Here is a 184-residue protein sequence, read N- to C-terminus: Peptidoglycan-recognition protein SC2 (184 aa).

Residues M1–G20 form the signal peptide. Residues S45–G169 enclose the N-acetylmuramoyl-L-alanine amidase domain. H50 lines the Zn(2+) pocket. Cysteines 57 and 63 form a disulfide. H159 and C167 together coordinate Zn(2+).

It belongs to the N-acetylmuramoyl-L-alanine amidase 2 family. The cofactor is Zn(2+).

It is found in the secreted. The catalysed reaction is Hydrolyzes the link between N-acetylmuramoyl residues and L-amino acid residues in certain cell-wall glycopeptides.. N-acetylmuramyl-L-alanine amidase involved in innate immunity by degrading bacterial peptidoglycans (PGN). Probably plays a scavenger role by digesting biologically active PGN into biologically inactive fragments. Has no direct bacteriolytic activity. The sequence is that of Peptidoglycan-recognition protein SC2 (PGRP-SC2) from Drosophila simulans (Fruit fly).